We begin with the raw amino-acid sequence, 427 residues long: Glutamate-1-semialdehyde 2,1-aminomutase (427 aa).

K265 bears the N6-(pyridoxal phosphate)lysine mark.

Belongs to the class-III pyridoxal-phosphate-dependent aminotransferase family. HemL subfamily. Homodimer. The cofactor is pyridoxal 5'-phosphate.

The protein resides in the cytoplasm. It catalyses the reaction (S)-4-amino-5-oxopentanoate = 5-aminolevulinate. It participates in porphyrin-containing compound metabolism; protoporphyrin-IX biosynthesis; 5-aminolevulinate from L-glutamyl-tRNA(Glu): step 2/2. The chain is Glutamate-1-semialdehyde 2,1-aminomutase from Neisseria meningitidis serogroup C / serotype 2a (strain ATCC 700532 / DSM 15464 / FAM18).